The primary structure comprises 557 residues: 2-isopropylmalate synthase (557 aa).

In terms of domain architecture, Pyruvate carboxyltransferase spans 31 to 304; sequence PTWCSVDLRD…DPGLNFASML (274 aa). D40, H243, H245, and N279 together coordinate Mg(2+). A regulatory domain region spans residues 439–557; it reads IENPIKFLNF…NTMIKDSAAV (119 aa).

Belongs to the alpha-IPM synthase/homocitrate synthase family. LeuA type 2 subfamily. Homodimer. Mg(2+) serves as cofactor.

The protein localises to the cytoplasm. It carries out the reaction 3-methyl-2-oxobutanoate + acetyl-CoA + H2O = (2S)-2-isopropylmalate + CoA + H(+). The protein operates within amino-acid biosynthesis; L-leucine biosynthesis; L-leucine from 3-methyl-2-oxobutanoate: step 1/4. Its function is as follows. Catalyzes the condensation of the acetyl group of acetyl-CoA with 3-methyl-2-oxobutanoate (2-ketoisovalerate) to form 3-carboxy-3-hydroxy-4-methylpentanoate (2-isopropylmalate). In Desulfitobacterium hafniense (strain Y51), this protein is 2-isopropylmalate synthase.